The chain runs to 329 residues: BTB/POZ domain-containing adapter for CUL3-mediated RhoA degradation protein 1 (329 aa).

The segment at 1–31 is disordered; it reads MSAEASGPAPAAAECLESPSPSSVEPGSPSY. The 69-residue stretch at 41-109 folds into the BTB domain; that stretch reads KYVKLNVGGS…LRDGSVPLPE (69 aa).

This sequence belongs to the BACURD family. As to quaternary structure, homotetramer; forms a two-fold symmetric tetramer in solution. Interacts with CUL3; interaction is direct and forms a 5:5 heterodecamer. Component of the BCR(KCTD13) E3 ubiquitin ligase complex, at least composed of CUL3, KCTD13/BACURD1 and RBX1. Interacts with RHOA; with a preference for RhoA-GDP. Interacts with POLD2 and PCNA. Interacts with SPRTN.

Its subcellular location is the nucleus. It functions in the pathway protein modification; protein ubiquitination. Functionally, substrate-specific adapter of a BCR (BTB-CUL3-RBX1) E3 ubiquitin-protein ligase complex required for synaptic transmission. The BCR(KCTD13) E3 ubiquitin ligase complex mediates the ubiquitination of RHOA, leading to its degradation by the proteasome, thereby regulating the actin cytoskeleton and promoting synaptic transmission. In Mus musculus (Mouse), this protein is BTB/POZ domain-containing adapter for CUL3-mediated RhoA degradation protein 1 (Kctd13).